Reading from the N-terminus, the 396-residue chain is Putative F-box/kelch-repeat protein At3g17540 (396 aa).

The F-box domain maps to 4-50 (TMVISDLPHEIESEILSRVPTKSLAKLHTTCKRWYALFRDPRFVKKN). Kelch repeat units follow at residues 163-209 (LRYC…GMSL), 253-299 (VLSI…FLAV), and 338-386 (RIYI…KRKG).

This is Putative F-box/kelch-repeat protein At3g17540 from Arabidopsis thaliana (Mouse-ear cress).